The sequence spans 284 residues: 2-dehydro-3-deoxyphosphooctonate aldolase (284 aa).

Belongs to the KdsA family.

It is found in the cytoplasm. The catalysed reaction is D-arabinose 5-phosphate + phosphoenolpyruvate + H2O = 3-deoxy-alpha-D-manno-2-octulosonate-8-phosphate + phosphate. It functions in the pathway carbohydrate biosynthesis; 3-deoxy-D-manno-octulosonate biosynthesis; 3-deoxy-D-manno-octulosonate from D-ribulose 5-phosphate: step 2/3. The protein operates within bacterial outer membrane biogenesis; lipopolysaccharide biosynthesis. The protein is 2-dehydro-3-deoxyphosphooctonate aldolase of Enterobacter sp. (strain 638).